An 833-amino-acid polypeptide reads, in one-letter code: Capsid-associated protein Vp91 (833 aa).

The signal sequence occupies residues Met-1–Ser-18. Residues Asn-137, Asn-180, Asn-199, and Asn-210 are each glycosylated (N-linked (GlcNAc...) asparagine; by host). Residues Cys-147 to Cys-196 form a C2HC BV-type zinc finger. Cystine bridges form between Cys-207–Cys-220 and Cys-260–Cys-273. Positions Asn-223 to Phe-281 constitute a Chitin-binding type-2 domain. N-linked (GlcNAc...) asparagine; by host glycans are attached at residues Asn-408, Asn-413, Asn-588, and Asn-609. The tract at residues Glu-647–Glu-673 is disordered.

It localises to the virion. Probable capsid-associated protein. The chain is Capsid-associated protein Vp91 from Choristoneura fumiferana nuclear polyhedrosis virus (CfMNPV).